A 452-amino-acid chain; its full sequence is Friend leukemia integration 1 transcription factor (452 aa).

At S39 the chain carries Phosphoserine. Positions P112–S198 constitute a PNT domain. The tract at residues D209–S271 is disordered. The segment covering S215 to R226 has biased composition (basic and acidic residues). The span at Q248–R257 shows a compositional bias: polar residues. Positions I281–D361 form a DNA-binding region, ETS. Residues N433–Y452 form a disordered region.

This sequence belongs to the ETS family. Can form homodimers or heterodimers with ETV6/TEL1.

The protein localises to the nucleus. Sequence-specific transcriptional activator. Recognizes the DNA sequence 5'-C[CA]GGAAGT-3'. The chain is Friend leukemia integration 1 transcription factor (FLI1) from Homo sapiens (Human).